Consider the following 296-residue polypeptide: Diaminopimelate epimerase (296 aa).

Substrate contacts are provided by N11 and N78. Residue C87 is the Proton donor of the active site. Substrate-binding positions include 88-89 (GN), N167, N203, and 221-222 (ER). C230 serves as the catalytic Proton acceptor. 231–232 (GT) contributes to the substrate binding site.

The protein belongs to the diaminopimelate epimerase family. As to quaternary structure, homodimer.

It is found in the cytoplasm. The enzyme catalyses (2S,6S)-2,6-diaminopimelate = meso-2,6-diaminopimelate. The protein operates within amino-acid biosynthesis; L-lysine biosynthesis via DAP pathway; DL-2,6-diaminopimelate from LL-2,6-diaminopimelate: step 1/1. Catalyzes the stereoinversion of LL-2,6-diaminopimelate (L,L-DAP) to meso-diaminopimelate (meso-DAP), a precursor of L-lysine and an essential component of the bacterial peptidoglycan. This Mycobacterium leprae (strain Br4923) protein is Diaminopimelate epimerase.